The primary structure comprises 314 residues: Homoserine O-succinyltransferase (314 aa).

Cys142 (acyl-thioester intermediate) is an active-site residue. Lys163 and Ser192 together coordinate substrate. His235 acts as the Proton acceptor in catalysis. Glu237 is an active-site residue. Arg249 is a binding site for substrate.

This sequence belongs to the MetA family.

It is found in the cytoplasm. The enzyme catalyses L-homoserine + succinyl-CoA = O-succinyl-L-homoserine + CoA. The protein operates within amino-acid biosynthesis; L-methionine biosynthesis via de novo pathway; O-succinyl-L-homoserine from L-homoserine: step 1/1. Its function is as follows. Transfers a succinyl group from succinyl-CoA to L-homoserine, forming succinyl-L-homoserine. The polypeptide is Homoserine O-succinyltransferase (Shewanella pealeana (strain ATCC 700345 / ANG-SQ1)).